The primary structure comprises 229 residues: ATP synthase subunit a (229 aa).

7 helical membrane passes run arginine 24 to cysteine 44, leucine 45 to phenylalanine 65, leucine 83 to cysteine 103, phenylalanine 117 to cysteine 137, phenylalanine 143 to phenylalanine 163, cysteine 177 to leucine 199, and leucine 206 to phenylalanine 228.

The protein belongs to the ATPase A chain family. F-type ATPases have 2 components, CF(1) - the catalytic core - and CF(0) - the membrane proton channel. CF(1) has five subunits: alpha(3), beta(3), gamma(1), delta(1), epsilon(1). CF(0) has three main subunits: a, b and c.

The protein resides in the mitochondrion inner membrane. In terms of biological role, mitochondrial membrane ATP synthase (F(1)F(0) ATP synthase or Complex V) produces ATP from ADP in the presence of a proton gradient across the membrane which is generated by electron transport complexes of the respiratory chain. F-type ATPases consist of two structural domains, F(1) - containing the extramembraneous catalytic core and F(0) - containing the membrane proton channel, linked together by a central stalk and a peripheral stalk. During catalysis, ATP synthesis in the catalytic domain of F(1) is coupled via a rotary mechanism of the central stalk subunits to proton translocation. Key component of the proton channel; it may play a direct role in the translocation of protons across the membrane. This chain is ATP synthase subunit a (ATP6), found in Trypanosoma brucei brucei.